We begin with the raw amino-acid sequence, 224 residues long: Type II restriction enzyme BstVI (224 aa).

This sequence belongs to the XhoI type II restriction endonuclease family.

The enzyme catalyses Endonucleolytic cleavage of DNA to give specific double-stranded fragments with terminal 5'-phosphates.. Its function is as follows. A P subtype restriction enzyme that recognizes the double-stranded sequence 5'-CTCGAG-3' and cleaves after C-1. The protein is Type II restriction enzyme BstVI of Geobacillus stearothermophilus (Bacillus stearothermophilus).